Reading from the N-terminus, the 443-residue chain is Threonine/serine transporter TdcC (443 aa).

Helical transmembrane passes span 22–42 (TTWTLGLFGTAIGAGVLFFPI), 44–64 (AGFGGLIPILLMLVLAYPIAF), 97–117 (GVVITFLYFFAICPLLWIYGV), 140–160 (FVALFLLLLMAFVIWFGKDLM), 163–183 (VMSYLVWPFIASLVLISLSLI), 207–227 (ILVTVWLGISIMVFSFNFSPI), 259–279 (ASMLMVAVVMFFAFSCLFTLS), 319–339 (ASIIALVAIFKSFFGHYLGTL), 366–386 (ISMIFIMGSTWVVAYANPNIL), 389–409 (IEAMGAPIIASLLCLLPMYAI), and 423–443 (DNVFVTLIGLLTILNIVYKLF).

This sequence belongs to the amino acid/polyamine transporter 2 family. SdaC/TdcC subfamily.

It localises to the cell inner membrane. It carries out the reaction L-threonine(in) + H(+)(in) = L-threonine(out) + H(+)(out). The enzyme catalyses L-serine(in) + H(+)(in) = L-serine(out) + H(+)(out). Functionally, involved in the import of threonine and serine into the cell, with the concomitant import of a proton (symport system). The sequence is that of Threonine/serine transporter TdcC from Salmonella newport (strain SL254).